Here is a 271-residue protein sequence, read N- to C-terminus: Ribosomal RNA small subunit methyltransferase A (271 aa).

S-adenosyl-L-methionine-binding residues include N19, L21, G46, E67, D92, and N113.

It belongs to the class I-like SAM-binding methyltransferase superfamily. rRNA adenine N(6)-methyltransferase family. RsmA subfamily.

It localises to the cytoplasm. The catalysed reaction is adenosine(1518)/adenosine(1519) in 16S rRNA + 4 S-adenosyl-L-methionine = N(6)-dimethyladenosine(1518)/N(6)-dimethyladenosine(1519) in 16S rRNA + 4 S-adenosyl-L-homocysteine + 4 H(+). Functionally, specifically dimethylates two adjacent adenosines (A1518 and A1519) in the loop of a conserved hairpin near the 3'-end of 16S rRNA in the 30S particle. May play a critical role in biogenesis of 30S subunits. This chain is Ribosomal RNA small subunit methyltransferase A, found in Photobacterium profundum (strain SS9).